The sequence spans 347 residues: Holliday junction branch migration complex subunit RuvB (347 aa).

A large ATPase domain (RuvB-L) region spans residues 1–182; the sequence is MSAQNPVLTP…FGIPVRLSFY (182 aa). Residues Leu21, Arg22, Gly63, Lys66, Thr67, Thr68, 129 to 131, Arg172, Tyr182, and Arg219 contribute to the ATP site; that span reads EDF. Thr67 is a binding site for Mg(2+). Positions 183-253 are small ATPAse domain (RuvB-S); that stretch reads TVEELELIVR…IADEALTRLL (71 aa). The head domain (RuvB-H) stretch occupies residues 256–347; it reads NMGLDQLDTR…QFRLTLEDDD (92 aa). DNA contacts are provided by Arg292, Arg311, and Arg316.

The protein belongs to the RuvB family. In terms of assembly, homohexamer. Forms an RuvA(8)-RuvB(12)-Holliday junction (HJ) complex. HJ DNA is sandwiched between 2 RuvA tetramers; dsDNA enters through RuvA and exits via RuvB. An RuvB hexamer assembles on each DNA strand where it exits the tetramer. Each RuvB hexamer is contacted by two RuvA subunits (via domain III) on 2 adjacent RuvB subunits; this complex drives branch migration. In the full resolvosome a probable DNA-RuvA(4)-RuvB(12)-RuvC(2) complex forms which resolves the HJ.

Its subcellular location is the cytoplasm. It catalyses the reaction ATP + H2O = ADP + phosphate + H(+). The RuvA-RuvB-RuvC complex processes Holliday junction (HJ) DNA during genetic recombination and DNA repair, while the RuvA-RuvB complex plays an important role in the rescue of blocked DNA replication forks via replication fork reversal (RFR). RuvA specifically binds to HJ cruciform DNA, conferring on it an open structure. The RuvB hexamer acts as an ATP-dependent pump, pulling dsDNA into and through the RuvAB complex. RuvB forms 2 homohexamers on either side of HJ DNA bound by 1 or 2 RuvA tetramers; 4 subunits per hexamer contact DNA at a time. Coordinated motions by a converter formed by DNA-disengaged RuvB subunits stimulates ATP hydrolysis and nucleotide exchange. Immobilization of the converter enables RuvB to convert the ATP-contained energy into a lever motion, pulling 2 nucleotides of DNA out of the RuvA tetramer per ATP hydrolyzed, thus driving DNA branch migration. The RuvB motors rotate together with the DNA substrate, which together with the progressing nucleotide cycle form the mechanistic basis for DNA recombination by continuous HJ branch migration. Branch migration allows RuvC to scan DNA until it finds its consensus sequence, where it cleaves and resolves cruciform DNA. In Allorhizobium ampelinum (strain ATCC BAA-846 / DSM 112012 / S4) (Agrobacterium vitis (strain S4)), this protein is Holliday junction branch migration complex subunit RuvB.